Reading from the N-terminus, the 138-residue chain is Oleosin G (138 aa).

Helical transmembrane passes span 14–34, 48–68, and 69–89; these read ILGFITLFVSGAVLLFLTGLT, VLIFFSPILIPLATVLFVAVA, and GFLSAGGFGLAALSAISWLYN. The Proline-knot signature appears at 47–58; that stretch reads PVLIFFSPILIP.

The protein belongs to the oleosin family. Expressed in megagametophytes (at protein level).

It localises to the lipid droplet. The protein localises to the membrane. The protein is Oleosin G of Pinus massoniana (Chinese red pine).